A 186-amino-acid polypeptide reads, in one-letter code: Potassium-transporting ATPase KdpC subunit (186 aa).

A helical membrane pass occupies residues 10-30 (LTIITMVLCGFLFPLAITLIG).

The protein belongs to the KdpC family. The system is composed of three essential subunits: KdpA, KdpB and KdpC.

Its subcellular location is the cell membrane. Functionally, part of the high-affinity ATP-driven potassium transport (or Kdp) system, which catalyzes the hydrolysis of ATP coupled with the electrogenic transport of potassium into the cytoplasm. This subunit acts as a catalytic chaperone that increases the ATP-binding affinity of the ATP-hydrolyzing subunit KdpB by the formation of a transient KdpB/KdpC/ATP ternary complex. This is Potassium-transporting ATPase KdpC subunit from Staphylococcus aureus (strain COL).